We begin with the raw amino-acid sequence, 315 residues long: MEQISNIAGGDTTKETMASLGLICEKDIHEQRLKIDSFIASPFRRSMNSLVERAQATAQSQVELMNLKADLREAEDELVKVLAVKTRKEARQMGIRDSISATQSRIEVLRRNLQLQKSKKDDSVRIISQQLQALSKSKDNAGKVTEDKADIHEAISWYNHALGFHVEAGHGVKFTFTNIDAKRPTREFSFTVHYGNDIYTLLDSDLQLDYINEMVQELNKTNDLFRFVRLMREQFLKSTLSELPTHSGQLQQETSAISASAPAISFSTDTNMSTPENKRSKVQVNRRQKRGSESPLLAPVSTSATRRSSRFKGKK.

Met-1 carries the post-translational modification N-acetylmethionine. A coiled-coil region spans residues 57–91; that stretch reads TAQSQVELMNLKADLREAEDELVKVLAVKTRKEAR. The interval 261 to 315 is disordered; the sequence is APAISFSTDTNMSTPENKRSKVQVNRRQKRGSESPLLAPVSTSATRRSSRFKGKK. The segment covering 266 to 275 has biased composition (polar residues); it reads FSTDTNMSTP. A compositionally biased stretch (basic residues) spans 280–289; sequence SKVQVNRRQK.

Belongs to the SPC25 family. Component of the NDC80 complex, which consists of NDC80, NUF2, SPC24 and SPC25.

It is found in the chromosome. The protein resides in the centromere. Functionally, acts as a component of the essential kinetochore-associated NDC80 complex, which is required for chromosome segregation and spindle checkpoint activity to ensure proper cell division. This Arabidopsis thaliana (Mouse-ear cress) protein is Kinetochore protein SPC25 homolog.